The chain runs to 601 residues: Abscisic acid cluster transcription factor abl7 (601 aa).

The zn(2)-C6 fungal-type DNA-binding region spans 13-40 (CDECRRRKLKCDRVRPQCGTCALSESEC).

The protein localises to the nucleus. Its function is as follows. Transcription factor that regulates the expression of the gene cluster that mediates the biosynthesis of abscisic acid (ABA), a phytohormone that acts antagonistically toward salicylic acid (SA), jasmonic acid (JA) and ethylene (ETH) signaling, to impede plant defense responses. The protein is Abscisic acid cluster transcription factor abl7 of Leptosphaeria maculans (strain JN3 / isolate v23.1.3 / race Av1-4-5-6-7-8) (Blackleg fungus).